The chain runs to 733 residues: MARILGVGRSSASSLNNKEDNESDVALLSPKDPNRVHTKEQLAHPASSNLDPSMQGLPAGLSLDDFIPGHLRTHIGSSSRGTRVPVIRNGGSNTLNFQFHDPAPRTVCNGCPPPRRDGSLNPDPAWYQTWPGPGSRPSMSPKPPASQHAQNWSATWTKDSKRQDKRWVKYEGIGPVDESGMPIAPRSSVDSPRDWYRRMFQQIHRKMPDLQLDWTLEDPPKVVSARASSAEPRHLGTLQRPASRPGTTETSSGRNWNHSEETSRNTFNYNFRPSSSGLHPPNQVPRHREKVENVWTEDSWNQFLHELETGHKPKKPLVDDPVEKPAQPIEVLLERELAKLSAELDKDLRAIETRLPSPKNSQAPRRPLEQPGLEQQPSARLSSAWRPNSPHAPYFSSSRPLSPHRMADGGGSPFLGRRDFVYPSSAREPSASERGSSPSRKEEKKRKAARLKFDFQAQSPKELSLQKGDIVYIHKEVDKNWLEGEHHGRLGIFPANYVEVLPADEIPKPIKPPTYQVLEYGDAVAQYTFKGDLEVELSFRKGERICLIRKVNEHWYEGRITGTGRQGIFPASYVQINREPRLRLCDDGPQLPASPNPTTTAHLSSHSHPSSIPVDPTDWGGRTSPRRSAFPFPITLQEPRSQTQSLNTPGPTLSHPRATSRPINLGPSSPNTEIHWTPYRAMYQYRPQNEDELELREGDRVDVMQQCDDGWFVGVSRRTQKFGTFPGNYVAPV.

Disordered stretches follow at residues 1-51, 129-165, 224-285, and 352-448; these read MARI…SNLD, TWPG…RQDK, SARA…NQVP, and ETRL…KRKA. Basic and acidic residues predominate over residues 32–42; sequence DPNRVHTKEQL. Residues 147-157 are compositionally biased toward polar residues; the sequence is QHAQNWSATWT. The 69-residue stretch at 164–232 folds into the SoHo domain; the sequence is DKRWVKYEGI…VSARASSAEP (69 aa). Polar residues-rich tracts occupy residues 245 to 256 and 264 to 277; these read PGTTETSSGRNW and RNTF…SSSG. A phosphoserine mark is found at Ser412 and Ser459. 2 SH3 domains span residues 444–503 and 518–579; these read KKRK…VLPA and LEYG…INRE. The segment at 444–579 is binds to vinculin; sequence KKRKAARLKF…PASYVQINRE (136 aa). The segment at 584-672 is disordered; sequence LCDDGPQLPA…INLGPSSPNT (89 aa). At Ser594 the chain carries Phosphoserine; by MAPK1. Residues 597-613 are compositionally biased toward low complexity; it reads PTTTAHLSSHSHPSSIP. Phosphoserine occurs at positions 607, 610, and 624. The span at 638–651 shows a compositional bias: polar residues; the sequence is EPRSQTQSLNTPGP. Positions 674 to 733 constitute an SH3 3 domain; it reads IHWTPYRAMYQYRPQNEDELELREGDRVDVMQQCDDGWFVGVSRRTQKFGTFPGNYVAPV. Residues 674–733 form a binds to SOS region; the sequence is IHWTPYRAMYQYRPQNEDELELREGDRVDVMQQCDDGWFVGVSRRTQKFGTFPGNYVAPV.

As to quaternary structure, interacts with vinculin by the first two SH3 domains and the proline rich region of vinculin. Binds to SOS (guanine nucleotide exchange factor of RAS and RAC), through its third SH3 domain. The formation of this complex is down-regulated by phosphorylation of SOS. Interacts with SAFB2, INPPL1/SHIP2 and SRCIN1. Interacts with DLG5 through its third SH3 domain. Interacts with SOCS7 and MAPK1/ERK2. Interacts with FASLG. In terms of processing, phosphorylated at Ser-594 by MAPK1/ERK2 during cell spreading.

It is found in the cell junction. The protein resides in the focal adhesion. Its subcellular location is the cytoplasm. The protein localises to the cytoskeleton. Functionally, promotes up-regulation of actin stress fiber formation. This Mus musculus (Mouse) protein is Vinexin (Sorbs3).